A 523-amino-acid chain; its full sequence is Mediator of RNA polymerase II transcription subunit 1.2 (523 aa).

It belongs to the Mediator complex subunit 1 family. Component of the Mediator complex.

The protein localises to the nucleus. Component of the Mediator complex, a coactivator involved in the regulated transcription of nearly all RNA polymerase II-dependent genes. Mediator functions as a bridge to convey information from gene-specific regulatory proteins to the basal RNA polymerase II transcription machinery. Mediator is recruited to promoters by direct interactions with regulatory proteins and serves as a scaffold for the assembly of a functional preinitiation complex with RNA polymerase II and the general transcription factors. This chain is Mediator of RNA polymerase II transcription subunit 1.2 (mdt-1.2), found in Caenorhabditis briggsae.